The following is a 341-amino-acid chain: Chorismate synthase (341 aa).

2 disordered regions span residues 45–64 (LERRRPGHHGSGQIVSGRQE) and 109–134 (HADDMWRNKFGHSDHRGGGRSSGRET). Position 48 (Arg48) interacts with NADP(+). Residues 128-130 (RSS), Gly280, 295-299 (KPTSS), and Arg308 contribute to the FMN site.

Belongs to the chorismate synthase family. As to quaternary structure, homotetramer. The cofactor is FMNH2.

The catalysed reaction is 5-O-(1-carboxyvinyl)-3-phosphoshikimate = chorismate + phosphate. It participates in metabolic intermediate biosynthesis; chorismate biosynthesis; chorismate from D-erythrose 4-phosphate and phosphoenolpyruvate: step 7/7. Functionally, catalyzes the anti-1,4-elimination of the C-3 phosphate and the C-6 proR hydrogen from 5-enolpyruvylshikimate-3-phosphate (EPSP) to yield chorismate, which is the branch point compound that serves as the starting substrate for the three terminal pathways of aromatic amino acid biosynthesis. This reaction introduces a second double bond into the aromatic ring system. This is Chorismate synthase from Bdellovibrio bacteriovorus (strain ATCC 15356 / DSM 50701 / NCIMB 9529 / HD100).